A 450-amino-acid polypeptide reads, in one-letter code: MGAPPGYRPSAWVHLLHQLPRADFQLRPVPSAFAPQEREYQQALLLVAALAGLGLGLSLIFIAVYLIRFCCCRPPEPPGAKSPPPGGGCVTWNCIAALLVGCAGIGVGFYGNSETSDGVSQLSSALLHANHTLTAIDHLVLEMVERLNEAVRTELTTLEEVLTQRTELVAAARGARRQAETVAQQLQGLAFWRGVPLSPLQVAEDVSFVEEYRWLAYVLLLLLELLVCLFTLLGLARQSKWLVIVMTVMSLLVLVLSWGSMGLEAATAVGLSDFCSSPDSYILNLTQEETGLGSDILNYYFLCNQAVSNPFQQRLTLSQRALANIHSQLQGLEREAVPQFPSAQKPVLSLEETLNVTEGNFHQLVALLHCRGLHKDYGSALRGLCEDTLEGLLFLLLFSLLSAGALATVLCSLPRAWALFPPSDDYEDTDDDDPFNPQESKRFVQWQSSI.

The Extracellular portion of the chain corresponds to 1-43 (MGAPPGYRPSAWVHLLHQLPRADFQLRPVPSAFAPQEREYQQA). Residues 44–64 (LLLVAALAGLGLGLSLIFIAV) form a helical membrane-spanning segment. Residues 65–88 (YLIRFCCCRPPEPPGAKSPPPGGG) are Cytoplasmic-facing. Residues 89-109 (CVTWNCIAALLVGCAGIGVGF) traverse the membrane as a helical segment. The Extracellular segment spans residues 110–214 (YGNSETSDGV…DVSFVEEYRW (105 aa)). A glycan (N-linked (GlcNAc...) asparagine) is linked at N130. A helical membrane pass occupies residues 215 to 235 (LAYVLLLLLELLVCLFTLLGL). Topologically, residues 236–240 (ARQSK) are cytoplasmic. The helical transmembrane segment at 241-261 (WLVIVMTVMSLLVLVLSWGSM) threads the bilayer. Topologically, residues 262–390 (GLEAATAVGL…LRGLCEDTLE (129 aa)) are extracellular. Disulfide bonds link C275/C385 and C303/C370. Residues N284 and N355 are each glycosylated (N-linked (GlcNAc...) asparagine). Residues 391–411 (GLLFLLLFSLLSAGALATVLC) traverse the membrane as a helical segment. At 412-450 (SLPRAWALFPPSDDYEDTDDDDPFNPQESKRFVQWQSSI) the chain is on the cytoplasmic side. The tract at residues 427-450 (EDTDDDDPFNPQESKRFVQWQSSI) is disordered. At S440 the chain carries Phosphoserine.

Belongs to the tweety family. Homotetramer; disulfide-linked. Homodimer. In terms of processing, N-glycosylated. Contains high-mannose, hybrid and complex oligosaccharides.

It is found in the cell membrane. It catalyses the reaction chloride(in) = chloride(out). The catalysed reaction is L-glutamate(out) = L-glutamate(in). In terms of biological role, calcium-independent, swelling-dependent volume-regulated anion channel (VRAC-swell) which plays a pivotal role in the process of regulatory volume decrease (RVD) in the brain through the efflux of anions like chloride and organic osmolytes like glutamate. This chain is Protein tweety homolog 1 (TTYH1), found in Bos taurus (Bovine).